We begin with the raw amino-acid sequence, 128 residues long: UPF0102 protein BCG_2919c (128 aa).

It belongs to the UPF0102 family.

The sequence is that of UPF0102 protein BCG_2919c from Mycobacterium bovis (strain BCG / Pasteur 1173P2).